The sequence spans 118 residues: MHTLDSLDAESRRTDVPEFWPGDTLKVHVRVVEGNRQRIQVFQGVVIRRQGGGVRETFTVRKVSFGVGVERTFPLHSPIVSRVEVVTRGDVRRAKLYYLRQLRGKAAKIKEKREPVGR.

It belongs to the bacterial ribosomal protein bL19 family.

This protein is located at the 30S-50S ribosomal subunit interface and may play a role in the structure and function of the aminoacyl-tRNA binding site. This is Large ribosomal subunit protein bL19 from Parafrankia sp. (strain EAN1pec).